The chain runs to 361 residues: UDP-N-acetylglucosamine--N-acetylmuramyl-(pentapeptide) pyrophosphoryl-undecaprenol N-acetylglucosamine transferase (361 aa).

Residues 13–15, N125, R167, S196, I251, 270–275, and Q296 contribute to the UDP-N-acetyl-alpha-D-glucosamine site; these read TGG and ALTVTE.

Belongs to the glycosyltransferase 28 family. MurG subfamily.

The protein resides in the cell inner membrane. The enzyme catalyses di-trans,octa-cis-undecaprenyl diphospho-N-acetyl-alpha-D-muramoyl-L-alanyl-D-glutamyl-meso-2,6-diaminopimeloyl-D-alanyl-D-alanine + UDP-N-acetyl-alpha-D-glucosamine = di-trans,octa-cis-undecaprenyl diphospho-[N-acetyl-alpha-D-glucosaminyl-(1-&gt;4)]-N-acetyl-alpha-D-muramoyl-L-alanyl-D-glutamyl-meso-2,6-diaminopimeloyl-D-alanyl-D-alanine + UDP + H(+). It functions in the pathway cell wall biogenesis; peptidoglycan biosynthesis. In terms of biological role, cell wall formation. Catalyzes the transfer of a GlcNAc subunit on undecaprenyl-pyrophosphoryl-MurNAc-pentapeptide (lipid intermediate I) to form undecaprenyl-pyrophosphoryl-MurNAc-(pentapeptide)GlcNAc (lipid intermediate II). In Psychrobacter cryohalolentis (strain ATCC BAA-1226 / DSM 17306 / VKM B-2378 / K5), this protein is UDP-N-acetylglucosamine--N-acetylmuramyl-(pentapeptide) pyrophosphoryl-undecaprenol N-acetylglucosamine transferase.